The following is a 157-amino-acid chain: Putative low molecular weight protein-tyrosine-phosphatase slr0328 (157 aa).

C7 functions as the Nucleophile in the catalytic mechanism. Residue R13 is part of the active site. Residue D124 is the Proton donor of the active site.

The protein belongs to the low molecular weight phosphotyrosine protein phosphatase family.

The catalysed reaction is O-phospho-L-tyrosyl-[protein] + H2O = L-tyrosyl-[protein] + phosphate. The chain is Putative low molecular weight protein-tyrosine-phosphatase slr0328 from Synechocystis sp. (strain ATCC 27184 / PCC 6803 / Kazusa).